A 513-amino-acid chain; its full sequence is MGAAAKLAFAVFLISCSSGAILGRSETQECIFYNANWERDRTNRTGVESCYGDKDKRRHCFATWKNISGSIEIVKQGCWLDDINCYDRTDCIEKKDSPEVYFCCCEGNMCNERFSYFPEMEVTQPTSNPVTPKPPYYNILLYSLVPLMLIAGIVICAFWVYRHHKMAYPPVLVPTQDPGPPPPSPLLGLKPLQLLEVKARGRFGCVWKAQLLNEYVAVKIFPIQDKQSWQNEYEVYSLPGMKHENILQFIGAEKRGTSVDVDLWLITAFHEKGSLSDFLKANVVSWNELCHIAETMARGLAYLHEDIPGLKDGHKPAISHRDIKSKNVLLKNNLTACIADFGLALKFEAGKSAGDTHGQVGTRRYMAPEVLEGAINFQRDAFLRIDMYAMGLVLWELASRCTAADGPVDEYMLPFEEEIGQHPSLEDMQEVVVHKKKRPVLRDYWQKHAGMAMLCETIEECWDHDAEARLSAGCVGERITQMQRLTNIITTEDIVTVVTMVTNVDFPPKESSL.

The signal sequence occupies residues 1-19; it reads MGAAAKLAFAVFLISCSSG. The Extracellular segment spans residues 20–135; that stretch reads AILGRSETQE…TSNPVTPKPP (116 aa). 5 disulfide bridges follow: Cys-30-Cys-60, Cys-50-Cys-78, Cys-85-Cys-104, Cys-91-Cys-103, and Cys-105-Cys-110. Residues Asn-43 and Asn-66 are each glycosylated (N-linked (GlcNAc...) asparagine). Residues 136–161 traverse the membrane as a helical segment; that stretch reads YYNILLYSLVPLMLIAGIVICAFWVY. Topologically, residues 162–513 are cytoplasmic; the sequence is RHHKMAYPPV…VDFPPKESSL (352 aa). Positions 192-485 constitute a Protein kinase domain; the sequence is LQLLEVKARG…GERITQMQRL (294 aa). Residues 198–206 and Lys-219 each bind ATP; that span reads KARGRFGCV. Residue Asp-322 is the Proton acceptor of the active site.

It belongs to the protein kinase superfamily. TKL Ser/Thr protein kinase family. TGFB receptor subfamily. Part of a complex consisting of MAGI2/ARIP1, ACVR2A, ACVR1B and SMAD3. Interacts with MAGI2/ARIP1. Interacts with type I receptor ACVR1. Interacts with BMP7. Interacts with TSC22D1/TSC-22. Interacts with activin A/INHBA. It depends on Mg(2+) as a cofactor. Mn(2+) serves as cofactor.

It is found in the cell membrane. The catalysed reaction is L-threonyl-[receptor-protein] + ATP = O-phospho-L-threonyl-[receptor-protein] + ADP + H(+). It carries out the reaction L-seryl-[receptor-protein] + ATP = O-phospho-L-seryl-[receptor-protein] + ADP + H(+). Functionally, on ligand binding, forms a receptor complex consisting of two type II and two type I transmembrane serine/threonine kinases. Type II receptors phosphorylate and activate type I receptors which autophosphorylate, then bind and activate SMAD transcriptional regulators. Receptor for activin A, activin B and inhibin A. Mediates induction of adipogenesis by GDF6. The sequence is that of Activin receptor type-2A (ACVR2A) from Bos taurus (Bovine).